The sequence spans 381 residues: DNA primase DnaG (381 aa).

In terms of domain architecture, Toprim spans 173–259 (DAILVVEGRS…EVEDLEKDEI (87 aa)). Glu-179, Asp-221, and Asp-223 together coordinate Mg(2+).

The protein belongs to the archaeal DnaG primase family. As to quaternary structure, forms a ternary complex with MCM helicase and DNA. Component of the archaeal exosome complex. It depends on Mg(2+) as a cofactor.

It carries out the reaction ssDNA + n NTP = ssDNA/pppN(pN)n-1 hybrid + (n-1) diphosphate.. RNA polymerase that catalyzes the synthesis of short RNA molecules used as primers for DNA polymerase during DNA replication. Also part of the exosome, which is a complex involved in RNA degradation. Acts as a poly(A)-binding protein that enhances the interaction between heteromeric, adenine-rich transcripts and the exosome. This chain is DNA primase DnaG, found in Methanothermobacter thermautotrophicus (strain ATCC 29096 / DSM 1053 / JCM 10044 / NBRC 100330 / Delta H) (Methanobacterium thermoautotrophicum).